The sequence spans 440 residues: Ribulose bisphosphate carboxylase large chain (440 aa).

Lys-4 carries the post-translational modification N6,N6,N6-trimethyllysine. 2 residues coordinate substrate: Asn-113 and Thr-163. Residue Lys-165 is the Proton acceptor of the active site. Residue Lys-167 participates in substrate binding. The Mg(2+) site is built by Lys-191, Asp-193, and Glu-194. Lys-191 is modified (N6-carboxylysine). The Proton acceptor role is filled by His-284. Positions 285, 317, and 369 each coordinate substrate.

It belongs to the RuBisCO large chain family. Type I subfamily. Heterohexadecamer of 8 large chains and 8 small chains; disulfide-linked. The disulfide link is formed within the large subunit homodimers. Requires Mg(2+) as cofactor. The disulfide bond which can form in the large chain dimeric partners within the hexadecamer appears to be associated with oxidative stress and protein turnover.

The protein localises to the plastid. It is found in the chloroplast. The enzyme catalyses 2 (2R)-3-phosphoglycerate + 2 H(+) = D-ribulose 1,5-bisphosphate + CO2 + H2O. It carries out the reaction D-ribulose 1,5-bisphosphate + O2 = 2-phosphoglycolate + (2R)-3-phosphoglycerate + 2 H(+). In terms of biological role, ruBisCO catalyzes two reactions: the carboxylation of D-ribulose 1,5-bisphosphate, the primary event in carbon dioxide fixation, as well as the oxidative fragmentation of the pentose substrate in the photorespiration process. Both reactions occur simultaneously and in competition at the same active site. This chain is Ribulose bisphosphate carboxylase large chain, found in Ptychomitrium gardneri (Gardner's ptychomitrium moss).